Consider the following 365-residue polypeptide: Caffeic acid 3-O-methyltransferase (365 aa).

Position 131 (asparagine 131) interacts with (E)-ferulate. Glycine 208, aspartate 231, aspartate 251, methionine 252, methionine 264, and lysine 265 together coordinate S-adenosyl-L-homocysteine. Residue histidine 269 is the Proton acceptor of the active site. Aspartate 270 is a (E)-5-hydroxyferulate binding site. Residues glutamate 297 and glutamate 329 contribute to the active site.

It belongs to the class I-like SAM-binding methyltransferase superfamily. Cation-independent O-methyltransferase family. COMT subfamily. Homodimer. More abundant in roots and stems.

The enzyme catalyses (E)-caffeate + S-adenosyl-L-methionine = (E)-ferulate + S-adenosyl-L-homocysteine + H(+). It carries out the reaction (E)-5-hydroxyferulate + S-adenosyl-L-methionine = (E)-sinapate + S-adenosyl-L-homocysteine + H(+). Its pathway is aromatic compound metabolism; phenylpropanoid biosynthesis. Functionally, catalyzes the conversion of caffeic acid to ferulic acid and of 5-hydroxyferulic acid to sinapic acid. The resulting products may subsequently be converted to the corresponding alcohols that are incorporated into lignins. The chain is Caffeic acid 3-O-methyltransferase from Medicago sativa (Alfalfa).